Reading from the N-terminus, the 73-residue chain is RNA-binding protein Hfq (73 aa).

One can recognise a Sm domain in the interval 8–68 (DQFLNQIRKD…ISTFAPQKNV (61 aa)).

This sequence belongs to the Hfq family. Homohexamer.

In terms of biological role, RNA chaperone that binds small regulatory RNA (sRNAs) and mRNAs to facilitate mRNA translational regulation in response to envelope stress, environmental stress and changes in metabolite concentrations. Also binds with high specificity to tRNAs. This Bacillus pumilus (strain SAFR-032) protein is RNA-binding protein Hfq.